A 289-amino-acid polypeptide reads, in one-letter code: Acetyl-coenzyme A carboxylase carboxyl transferase subunit beta (289 aa).

A CoA carboxyltransferase N-terminal domain is found at 28-289 (VMTKCPKCKK…QGGEMAVWQS (262 aa)). 4 residues coordinate Zn(2+): Cys32, Cys35, Cys51, and Cys54. The segment at 32–54 (CPKCKKIMYTKEVLKNLKVCVNC) adopts a C4-type zinc-finger fold.

The protein belongs to the AccD/PCCB family. Acetyl-CoA carboxylase is a heterohexamer composed of biotin carboxyl carrier protein (AccB), biotin carboxylase (AccC) and two subunits each of ACCase subunit alpha (AccA) and ACCase subunit beta (AccD). Zn(2+) is required as a cofactor.

The protein resides in the cytoplasm. The catalysed reaction is N(6)-carboxybiotinyl-L-lysyl-[protein] + acetyl-CoA = N(6)-biotinyl-L-lysyl-[protein] + malonyl-CoA. The protein operates within lipid metabolism; malonyl-CoA biosynthesis; malonyl-CoA from acetyl-CoA: step 1/1. Functionally, component of the acetyl coenzyme A carboxylase (ACC) complex. Biotin carboxylase (BC) catalyzes the carboxylation of biotin on its carrier protein (BCCP) and then the CO(2) group is transferred by the transcarboxylase to acetyl-CoA to form malonyl-CoA. In Bacillus thuringiensis (strain Al Hakam), this protein is Acetyl-coenzyme A carboxylase carboxyl transferase subunit beta.